Reading from the N-terminus, the 366-residue chain is uncharacterized protein (366 aa).

The region spanning 63-288 (ARVAMVGFPS…LLEKMWEYLA (226 aa)) is the OBG-type G domain. GTP is bound by residues 69 to 76 (GFPSVGKS), 115 to 119 (DLPGI), and 246 to 249 (NKVD). The 78-residue stretch at 288–365 (ALVRVYTKKP…DHEDVIQIVK (78 aa)) folds into the TGS domain.

It belongs to the TRAFAC class OBG-HflX-like GTPase superfamily. OBG GTPase family.

This is an uncharacterized protein from Caenorhabditis elegans.